The sequence spans 808 residues: Probable E3 ubiquitin-protein ligase hulA (808 aa).

Residues 1-112 form the C2 domain; sequence MGSNLPAQPN…QMGGDEMLTR (112 aa). Disordered stretches follow at residues 134 to 231 and 275 to 346; these read NLST…GWER and RRAH…YFVD. Composition is skewed to polar residues over residues 142–159 and 171–198; these read QANG…SSGL and GPSQ…PSST. The span at 199–210 shows a compositional bias: low complexity; the sequence is VAPVNGAAAPGA. Polar residues predominate over residues 211 to 220; that stretch reads SRTNLSSFED. Residues 223-256 form the WW 1 domain; the sequence is GRLPAGWERREDNLGRTYYVDHNTRTTTWTRPSS. Positions 275–288 are enriched in basic and acidic residues; the sequence is RRAHQSRMLPEDRT. Residues 289 to 303 show a composition bias toward polar residues; that stretch reads GASSPNLQENQQAQT. A compositionally biased stretch (low complexity) spans 317–326; the sequence is ATGATTAGTG. 2 consecutive WW domains span residues 326 to 359 and 386 to 419; these read GELP…DPRR and GPLP…DPRL. The HECT domain occupies 475–808; that stretch reads SASDLKKRLM…VEETLGFGQE (334 aa). The Glycyl thioester intermediate role is filled by cysteine 776.

This sequence belongs to the RSP5/NEDD4 family. In terms of assembly, interacts with creD.

It localises to the cytoplasm. The enzyme catalyses S-ubiquitinyl-[E2 ubiquitin-conjugating enzyme]-L-cysteine + [acceptor protein]-L-lysine = [E2 ubiquitin-conjugating enzyme]-L-cysteine + N(6)-ubiquitinyl-[acceptor protein]-L-lysine.. It functions in the pathway protein modification; protein ubiquitination. In terms of biological role, E3 ubiquitin-protein ligase which accepts ubiquitin from an E2 ubiquitin-conjugating enzyme in the form of a thioester and then directly transfers the ubiquitin to targeted substrates. Probably involved in the regulatory network controlling carbon source utilization. This is Probable E3 ubiquitin-protein ligase hulA (hulA) from Aspergillus terreus (strain NIH 2624 / FGSC A1156).